A 425-amino-acid polypeptide reads, in one-letter code: Serine--tRNA ligase (425 aa).

Positions Tyr108–Pro134 are disordered. The segment covering Pro117–Pro134 has biased composition (basic and acidic residues). L-serine is bound at residue Thr233–Glu235. Arg264–Glu266 contacts ATP. Glu287 lines the L-serine pocket. Glu351 to Ser354 contributes to the ATP binding site. Ser385 provides a ligand contact to L-serine.

Belongs to the class-II aminoacyl-tRNA synthetase family. Type-1 seryl-tRNA synthetase subfamily. In terms of assembly, homodimer. The tRNA molecule binds across the dimer.

It is found in the cytoplasm. It carries out the reaction tRNA(Ser) + L-serine + ATP = L-seryl-tRNA(Ser) + AMP + diphosphate + H(+). The enzyme catalyses tRNA(Sec) + L-serine + ATP = L-seryl-tRNA(Sec) + AMP + diphosphate + H(+). It participates in aminoacyl-tRNA biosynthesis; selenocysteinyl-tRNA(Sec) biosynthesis; L-seryl-tRNA(Sec) from L-serine and tRNA(Sec): step 1/1. Its function is as follows. Catalyzes the attachment of serine to tRNA(Ser). Is also able to aminoacylate tRNA(Sec) with serine, to form the misacylated tRNA L-seryl-tRNA(Sec), which will be further converted into selenocysteinyl-tRNA(Sec). The protein is Serine--tRNA ligase of Synechococcus sp. (strain CC9311).